The following is a 402-amino-acid chain: 1-deoxy-D-xylulose 5-phosphate reductoisomerase (402 aa).

The NADPH site is built by Thr-10, Gly-11, Ser-12, Ile-13, Gly-36, Arg-37, Asn-38, and Asn-124. 1-deoxy-D-xylulose 5-phosphate is bound at residue Lys-125. Residue Glu-126 coordinates NADPH. Asp-150 serves as a coordination point for Mn(2+). Positions 151, 152, 186, and 209 each coordinate 1-deoxy-D-xylulose 5-phosphate. Residue Glu-152 participates in Mn(2+) binding. An NADPH-binding site is contributed by Gly-215. 4 residues coordinate 1-deoxy-D-xylulose 5-phosphate: Ser-222, Asn-227, Lys-228, and Glu-231. Glu-231 contacts Mn(2+).

Belongs to the DXR family. The cofactor is Mg(2+). Mn(2+) is required as a cofactor.

The catalysed reaction is 2-C-methyl-D-erythritol 4-phosphate + NADP(+) = 1-deoxy-D-xylulose 5-phosphate + NADPH + H(+). The protein operates within isoprenoid biosynthesis; isopentenyl diphosphate biosynthesis via DXP pathway; isopentenyl diphosphate from 1-deoxy-D-xylulose 5-phosphate: step 1/6. With respect to regulation, inhibited by fosmidomycin. Catalyzes the NADPH-dependent rearrangement and reduction of 1-deoxy-D-xylulose-5-phosphate (DXP) to 2-C-methyl-D-erythritol 4-phosphate (MEP). This is 1-deoxy-D-xylulose 5-phosphate reductoisomerase from Synechococcus sp. (strain ATCC 27144 / PCC 6301 / SAUG 1402/1) (Anacystis nidulans).